A 517-amino-acid polypeptide reads, in one-letter code: Acetylcholine receptor subunit gamma (517 aa).

A signal peptide spans 1-22 (MHGGQGPLLLLLLLAVCLGAQG). At 23-240 (RNQEERLLAD…VVFYLLIQRK (218 aa)) the chain is on the extracellular side. N-linked (GlcNAc...) asparagine glycans are attached at residues asparagine 52 and asparagine 163. Cysteine 150 and cysteine 164 are joined by a disulfide. The next 3 helical transmembrane spans lie at 241–265 (PLFY…IHFL), 275–293 (TVAI…LVAK), and 309–330 (LTFL…LNVS). Residues 331 to 474 (LRSPHTHSMA…WFLVGRVLDR (144 aa)) are Cytoplasmic-facing. Residues 475 to 495 (VCFLAMLSLFICGTAGIFLMA) form a helical membrane-spanning segment.

The protein belongs to the ligand-gated ion channel (TC 1.A.9) family. Acetylcholine receptor (TC 1.A.9.1) subfamily. Gamma/CHRNG sub-subfamily. As to quaternary structure, pentamer of two alpha chains, and one each of the beta, delta, and gamma (in immature muscle) or epsilon (in mature muscle) chains.

It is found in the postsynaptic cell membrane. The protein localises to the cell membrane. The enzyme catalyses K(+)(in) = K(+)(out). It catalyses the reaction Na(+)(in) = Na(+)(out). Functionally, after binding acetylcholine, the AChR responds by an extensive change in conformation that affects all subunits and leads to opening of an ion-conducting channel across the plasma membrane. This chain is Acetylcholine receptor subunit gamma, found in Homo sapiens (Human).